The chain runs to 156 residues: Movement protein P17 (156 aa).

The tract at residues 38–54 (AEDVEEEAIAAQEELEF) is homodimerization. Residues 57 to 156 (DEAQARHSCL…RAAPKLIKRG (100 aa)) are RNA-binding. A phosphoserine mark is found at S71, S79, S137, and S140. The disordered stretch occupies residues 106–156 (ASYFSSSARPLPPPPAPSLMSWTPIAKYHPSSPTSTSSKLRRAAPKLIKRG). Positions 144–156 (KLRRAAPKLIKRG) are enriched in basic residues.

It belongs to the polerovirus movement protein family. In terms of assembly, homodimer. Post-translationally, expressed as a nonphosphorylated 20kDa form and a phosphorylated 22kDa form. Phosphorylated by a host PKC-related kinase. Serine phosphorylation is required for plamodesma targeting.

It localises to the host cell junction. It is found in the host plasmodesma. The protein resides in the host chloroplast envelope. Its subcellular location is the host Golgi apparatus. The protein localises to the host mitochondrion outer membrane. In terms of biological role, together with movement protein P3a, facilitates long-distance movement of virions in host. Transports viral genome to neighboring plant cells directly through plasmosdesmata, without any budding. The movement protein allows efficient cell to cell propagation, by bypassing the host cell wall barrier. Binds ssRNA. This chain is Movement protein P17, found in Solanum tuberosum (Potato).